The chain runs to 336 residues: Foldase protein PrsA (336 aa).

The N-terminal stretch at 1 to 22 is a signal peptide; the sequence is MKSAKKLLSVLCLGIFILTFTA. C23 carries N-palmitoyl cysteine lipidation. C23 carries the S-diacylglycerol cysteine lipid modification. Positions 194–286 constitute a PpiC domain; it reads PNTMNVSHIL…WGYHIIKVNS (93 aa).

This sequence belongs to the PrsA family.

The protein resides in the cell membrane. It catalyses the reaction [protein]-peptidylproline (omega=180) = [protein]-peptidylproline (omega=0). Functionally, plays a major role in protein secretion by helping the post-translocational extracellular folding of several secreted proteins. This chain is Foldase protein PrsA, found in Clostridium botulinum (strain ATCC 19397 / Type A).